Reading from the N-terminus, the 25-residue chain is Androctonin (25 aa).

Intrachain disulfides connect Cys4–Cys20 and Cys10–Cys16.

The protein resides in the secreted. In terms of biological role, active against both bacteria (Gram-positive and Gram-negative) and filamentous fungi. Acts on the membrane of the bacterial cells. It destabilize a membrane by modifying its properties. This is Androctonin from Androctonus australis (Sahara scorpion).